A 129-amino-acid polypeptide reads, in one-letter code: MSHIPSELKYATSHEWIRVEANGEAVVGITEHAQDLLGDMVFVDLPEVGKQIGAGDDCAVAESVKAASDIYSPVSGEIVAINEELEGSPELVNSDPYGAGWLFRIKLDDAGELANLLDAEGYQNLVDEE.

Residues 24-106 enclose the Lipoyl-binding domain; sequence EAVVGITEHA…YGAGWLFRIK (83 aa). Lys65 carries the N6-lipoyllysine modification.

It belongs to the GcvH family. In terms of assembly, the glycine cleavage system is composed of four proteins: P, T, L and H. Requires (R)-lipoate as cofactor.

Its function is as follows. The glycine cleavage system catalyzes the degradation of glycine. The H protein shuttles the methylamine group of glycine from the P protein to the T protein. This is Glycine cleavage system H protein from Aeromonas salmonicida (strain A449).